A 307-amino-acid chain; its full sequence is Elongation factor Ts (307 aa).

An involved in Mg(2+) ion dislocation from EF-Tu region spans residues 79–82 (TDFV).

This sequence belongs to the EF-Ts family.

It localises to the cytoplasm. In terms of biological role, associates with the EF-Tu.GDP complex and induces the exchange of GDP to GTP. It remains bound to the aminoacyl-tRNA.EF-Tu.GTP complex up to the GTP hydrolysis stage on the ribosome. The polypeptide is Elongation factor Ts (Bartonella tribocorum (strain CIP 105476 / IBS 506)).